We begin with the raw amino-acid sequence, 378 residues long: Pre-B-cell leukemia transcription factor 4 (378 aa).

Positions 1 to 15 (MAAPLRPVPPQPAPR) are enriched in pro residues. Disordered stretches follow at residues 1–24 (MAAPLRPVPPQPAPRRLPTTAPLG) and 100–125 (VSRPEKRGRGAAAGSTATPGGCPNDN). Residues 22-214 (PLGHDTSDVL…VMTLRSRFLD (193 aa)) enclose the PBC domain. A PBC-A region spans residues 29-107 (DVLQQIMAIT…EGVSRPEKRG (79 aa)). Positions 109–120 (GAAAGSTATPGG) are enriched in low complexity. The interval 110-214 (AAAGSTATPG…VMTLRSRFLD (105 aa)) is PBC-B. The homeobox; TALE-type DNA-binding region spans 215 to 277 (ARRKRRNFSK…NKRIRYKKNT (63 aa)). Disordered stretches follow at residues 291 to 320 (ASTVTKARRPRGQSSCQSTPSPGPCGPLPL) and 355 to 378 (RAAPQPASSPAGESGSFNWDAASN). Residues 356 to 370 (AAPQPASSPAGESGS) are compositionally biased toward low complexity.

This sequence belongs to the TALE/PBX homeobox family. As to expression, almost exclusively expressed in testis.

It is found in the nucleus. The chain is Pre-B-cell leukemia transcription factor 4 (Pbx4) from Mus musculus (Mouse).